The primary structure comprises 383 residues: Smad nuclear-interacting protein 1 (383 aa).

The span at 1 to 10 (MKAGKSERER) shows a compositional bias: basic and acidic residues. The interval 1 to 209 (MKAGKSERER…NRSKEVPVKE (209 aa)) is disordered. Serine 18 carries the post-translational modification Phosphoserine. A Glycyl lysine isopeptide (Lys-Gly) (interchain with G-Cter in SUMO); alternate cross-link involves residue lysine 28. Residue lysine 28 forms a Glycyl lysine isopeptide (Lys-Gly) (interchain with G-Cter in SUMO1); alternate linkage. A Glycyl lysine isopeptide (Lys-Gly) (interchain with G-Cter in SUMO2); alternate cross-link involves residue lysine 28. Positions 28-43 (KQERLSPEPVAHRRPD) are enriched in basic and acidic residues. Phosphoserine is present on residues serine 33, serine 48, and serine 50. The span at 44–56 (APAASLSPPAAEP) shows a compositional bias: low complexity. Basic residues predominate over residues 59 to 90 (SGHRGSRARSPAKKKSKSSGRRSKSPRTKRSQ). Position 91 is a phosphoserine (serine 91). Basic and acidic residues-rich tracts occupy residues 99–134 (VKQEREDHPRRGREDRQHREPSEQEHRRARNSERDR) and 143–159 (RSSDERPVSGQDRDRDS). A Glycyl lysine isopeptide (Lys-Gly) (interchain with G-Cter in SUMO2) cross-link involves residue lysine 100. Serine 145 is subject to Phosphoserine. The stretch at 153-194 (QDRDRDSQNLQAQEEERDFHNARRREHRQQNESAGSEAQEVI) forms a coiled coil. Residue lysine 210 forms a Glycyl lysine isopeptide (Lys-Gly) (interchain with G-Cter in SUMO2) linkage. Positions 268-331 (YLLGRHRRIA…NGTFLNNKRI (64 aa)) constitute an FHA domain. Residues 359 to 369 (ESSDTSELDRK) show a composition bias toward basic and acidic residues. Residues 359–383 (ESSDTSELDRKEDEDDEEEEMVSDS) form a disordered region. Positions 370-383 (EDEDDEEEEMVSDS) are enriched in acidic residues. Position 381 is a phosphoserine (serine 381).

As to quaternary structure, component of activated spliceosome complexes. Binds SMAD4 and CREBBP/EP300. Component of the minor spliceosome, which splices U12-type introns. Binds the SMAD1/OAZ1/PSMB4 complex. Interacts with DROSHA and SMARCA4. Component of the SNARP complex which consists at least of SNIP1, SNW1, THRAP3, BCLAF1 and PNN. Post-translationally, degraded by the proteasome upon binding to the SMAD1/OAZ1/PSMB4 complex.

Its subcellular location is the nucleus. Required for pre-mRNA splicing as component of the spliceosome. As a component of the minor spliceosome, involved in the splicing of U12-type introns in pre-mRNAs. Down-regulates NF-kappa-B signaling by competing with RELA for CREBBP/EP300 binding. Involved in the microRNA (miRNA) biogenesis. May be involved in cyclin-D1/CCND1 mRNA stability through the SNARP complex which associates with both the 3'end of the CCND1 gene and its mRNA. This Mus musculus (Mouse) protein is Smad nuclear-interacting protein 1 (Snip1).